We begin with the raw amino-acid sequence, 142 residues long: Transcription antitermination protein NusB (142 aa).

The protein belongs to the NusB family.

Its function is as follows. Involved in transcription antitermination. Required for transcription of ribosomal RNA (rRNA) genes. Binds specifically to the boxA antiterminator sequence of the ribosomal RNA (rrn) operons. The polypeptide is Transcription antitermination protein NusB (Thermobifida fusca (strain YX)).